We begin with the raw amino-acid sequence, 211 residues long: N-(5'-phosphoribosyl)anthranilate isomerase (211 aa).

Belongs to the TrpF family.

The catalysed reaction is N-(5-phospho-beta-D-ribosyl)anthranilate = 1-(2-carboxyphenylamino)-1-deoxy-D-ribulose 5-phosphate. Its pathway is amino-acid biosynthesis; L-tryptophan biosynthesis; L-tryptophan from chorismate: step 3/5. The chain is N-(5'-phosphoribosyl)anthranilate isomerase from Chromohalobacter salexigens (strain ATCC BAA-138 / DSM 3043 / CIP 106854 / NCIMB 13768 / 1H11).